The sequence spans 291 residues: Peptide methionine sulfoxide reductase MsrB/MsrA (291 aa).

The 124-residue stretch at 1–124 (MLANLQHLSD…NSAALRFVAR (124 aa)) folds into the MsrB domain. The Nucleophile role is filled by Cys-113. The interval 127–284 (GTALFAAGCF…PGGYCHVSLH (158 aa)) is peptide methionine sulfoxide reductase A. Cys-135 is a catalytic residue.

It in the N-terminal section; belongs to the MsrB Met sulfoxide reductase family. This sequence in the C-terminal section; belongs to the MsrA Met sulfoxide reductase family.

It carries out the reaction L-methionyl-[protein] + [thioredoxin]-disulfide + H2O = L-methionyl-(R)-S-oxide-[protein] + [thioredoxin]-dithiol. It catalyses the reaction L-methionyl-[protein] + [thioredoxin]-disulfide + H2O = L-methionyl-(S)-S-oxide-[protein] + [thioredoxin]-dithiol. The enzyme catalyses [thioredoxin]-disulfide + L-methionine + H2O = L-methionine (S)-S-oxide + [thioredoxin]-dithiol. Has an important function as a repair enzyme for proteins that have been inactivated by oxidation. Catalyzes the reversible oxidation-reduction of methionine sulfoxide in proteins to methionine. The protein is Peptide methionine sulfoxide reductase MsrB/MsrA (msrAB) of Treponema pallidum (strain Nichols).